Reading from the N-terminus, the 189-residue chain is ATP-dependent protease subunit HslV (189 aa).

The active site involves Thr-12. Ala-172, Cys-175, and Thr-178 together coordinate Na(+).

Belongs to the peptidase T1B family. HslV subfamily. In terms of assembly, a double ring-shaped homohexamer of HslV is capped on each side by a ring-shaped HslU homohexamer. The assembly of the HslU/HslV complex is dependent on binding of ATP.

It is found in the cytoplasm. It carries out the reaction ATP-dependent cleavage of peptide bonds with broad specificity.. Allosterically activated by HslU binding. Functionally, protease subunit of a proteasome-like degradation complex believed to be a general protein degrading machinery. This Anaplasma phagocytophilum (strain HZ) protein is ATP-dependent protease subunit HslV.